The chain runs to 423 residues: Glucose-1-phosphate adenylyltransferase (423 aa).

Alpha-D-glucose 1-phosphate-binding positions include tyrosine 100, glycine 165, 180–181 (EK), and serine 191.

The protein belongs to the bacterial/plant glucose-1-phosphate adenylyltransferase family. Homotetramer.

The enzyme catalyses alpha-D-glucose 1-phosphate + ATP + H(+) = ADP-alpha-D-glucose + diphosphate. It participates in glycan biosynthesis; glycogen biosynthesis. In terms of biological role, involved in the biosynthesis of ADP-glucose, a building block required for the elongation reactions to produce glycogen. Catalyzes the reaction between ATP and alpha-D-glucose 1-phosphate (G1P) to produce pyrophosphate and ADP-Glc. This chain is Glucose-1-phosphate adenylyltransferase, found in Lachnospira eligens (strain ATCC 27750 / DSM 3376 / VPI C15-48 / C15-B4) (Eubacterium eligens).